The chain runs to 86 residues: Translation initiation factor IF-1 (86 aa).

The region spanning 1–72 is the S1-like domain; that stretch reads MPKDDVIKME…TKGRIVYRKK (72 aa).

It belongs to the IF-1 family. As to quaternary structure, component of the 30S ribosomal translation pre-initiation complex which assembles on the 30S ribosome in the order IF-2 and IF-3, IF-1 and N-formylmethionyl-tRNA(fMet); mRNA recruitment can occur at any time during PIC assembly.

It localises to the cytoplasm. Its function is as follows. One of the essential components for the initiation of protein synthesis. Stabilizes the binding of IF-2 and IF-3 on the 30S subunit to which N-formylmethionyl-tRNA(fMet) subsequently binds. Helps modulate mRNA selection, yielding the 30S pre-initiation complex (PIC). Upon addition of the 50S ribosomal subunit IF-1, IF-2 and IF-3 are released leaving the mature 70S translation initiation complex. The polypeptide is Translation initiation factor IF-1 (Pseudothermotoga lettingae (strain ATCC BAA-301 / DSM 14385 / NBRC 107922 / TMO) (Thermotoga lettingae)).